The following is a 158-amino-acid chain: NAD(P)H-quinone oxidoreductase subunit J, chloroplastic (158 aa).

This sequence belongs to the complex I 30 kDa subunit family. NDH is composed of at least 16 different subunits, 5 of which are encoded in the nucleus.

Its subcellular location is the plastid. It is found in the chloroplast thylakoid membrane. It catalyses the reaction a plastoquinone + NADH + (n+1) H(+)(in) = a plastoquinol + NAD(+) + n H(+)(out). The enzyme catalyses a plastoquinone + NADPH + (n+1) H(+)(in) = a plastoquinol + NADP(+) + n H(+)(out). Its function is as follows. NDH shuttles electrons from NAD(P)H:plastoquinone, via FMN and iron-sulfur (Fe-S) centers, to quinones in the photosynthetic chain and possibly in a chloroplast respiratory chain. The immediate electron acceptor for the enzyme in this species is believed to be plastoquinone. Couples the redox reaction to proton translocation, and thus conserves the redox energy in a proton gradient. The polypeptide is NAD(P)H-quinone oxidoreductase subunit J, chloroplastic (Pelargonium hortorum (Common geranium)).